An 85-amino-acid chain; its full sequence is V-type proton ATPase subunit f (85 aa).

2 helical membrane passes run 13–33 and 56–76; these read CTGLSLIGIVFLLVLSYLFSI and CLGAVVIYAVFFLFCGSQVIV.

As to quaternary structure, V-ATPase is a heteromultimeric enzyme composed of a peripheral catalytic V1 complex (components A to H) attached to an integral membrane V0 proton pore complex (components: a, c, c', c'', d, e, f and VOA1).

The protein resides in the endoplasmic reticulum membrane. Its function is as follows. Accessory component of the V0 complex of vacuolar(H+)-ATPase (V-ATPase), a multisubunit enzyme composed of a peripheral complex (V1) that hydrolyzes ATP and a membrane integral complex (V0) that translocates protons. V-ATPase is responsible for acidifying and maintaining the pH of intracellular compartments. In Schizosaccharomyces pombe (strain 972 / ATCC 24843) (Fission yeast), this protein is V-type proton ATPase subunit f.